The chain runs to 45 residues: Photosystem II reaction center protein K (45 aa).

A propeptide spanning residues 1–8 (MLMSLFLA) is cleaved from the precursor. Residues 23 to 43 (ILPIIPLFFLLLAFVWQAAIG) traverse the membrane as a helical segment.

This sequence belongs to the PsbK family. PSII is composed of 1 copy each of membrane proteins PsbA, PsbB, PsbC, PsbD, PsbE, PsbF, PsbH, PsbI, PsbJ, PsbK, PsbL, PsbM, PsbT, PsbX, PsbY, PsbZ, Psb30/Ycf12, at least 3 peripheral proteins of the oxygen-evolving complex and a large number of cofactors. It forms dimeric complexes.

The protein localises to the plastid. It is found in the cyanelle thylakoid membrane. In terms of biological role, one of the components of the core complex of photosystem II (PSII). PSII is a light-driven water:plastoquinone oxidoreductase that uses light energy to abstract electrons from H(2)O, generating O(2) and a proton gradient subsequently used for ATP formation. It consists of a core antenna complex that captures photons, and an electron transfer chain that converts photonic excitation into a charge separation. This is Photosystem II reaction center protein K from Cyanophora paradoxa.